The chain runs to 363 residues: Peptide chain release factor 2 (363 aa).

An N5-methylglutamine modification is found at Gln-251.

This sequence belongs to the prokaryotic/mitochondrial release factor family. Post-translationally, methylated by PrmC. Methylation increases the termination efficiency of RF2.

It is found in the cytoplasm. In terms of biological role, peptide chain release factor 2 directs the termination of translation in response to the peptide chain termination codons UGA and UAA. This chain is Peptide chain release factor 2 (prfB), found in Helicobacter pylori (strain ATCC 700392 / 26695) (Campylobacter pylori).